A 450-amino-acid polypeptide reads, in one-letter code: NADP-specific glutamate dehydrogenase (450 aa).

K111 is an active-site residue.

The protein belongs to the Glu/Leu/Phe/Val dehydrogenases family. In terms of assembly, homohexamer.

It catalyses the reaction L-glutamate + NADP(+) + H2O = 2-oxoglutarate + NH4(+) + NADPH + H(+). This chain is NADP-specific glutamate dehydrogenase, found in Hebeloma cylindrosporum.